We begin with the raw amino-acid sequence, 388 residues long: Formate-dependent phosphoribosylglycinamide formyltransferase (388 aa).

Residues 20–21 (EL) and glutamate 80 each bind N(1)-(5-phospho-beta-D-ribosyl)glycinamide. Residues arginine 112, lysine 153, 158 to 163 (SSGKGQ), 193 to 196 (EEFI), and glutamate 201 contribute to the ATP site. The ATP-grasp domain occupies 117–306 (RLAFEKLGLR…EFEIHARAIL (190 aa)). Residues glutamate 265 and glutamate 277 each coordinate Mg(2+). Residues aspartate 284, lysine 352, and 359 to 360 (RR) contribute to the N(1)-(5-phospho-beta-D-ribosyl)glycinamide site.

It belongs to the PurK/PurT family. As to quaternary structure, homodimer.

The enzyme catalyses N(1)-(5-phospho-beta-D-ribosyl)glycinamide + formate + ATP = N(2)-formyl-N(1)-(5-phospho-beta-D-ribosyl)glycinamide + ADP + phosphate + H(+). It participates in purine metabolism; IMP biosynthesis via de novo pathway; N(2)-formyl-N(1)-(5-phospho-D-ribosyl)glycinamide from N(1)-(5-phospho-D-ribosyl)glycinamide (formate route): step 1/1. Involved in the de novo purine biosynthesis. Catalyzes the transfer of formate to 5-phospho-ribosyl-glycinamide (GAR), producing 5-phospho-ribosyl-N-formylglycinamide (FGAR). Formate is provided by PurU via hydrolysis of 10-formyl-tetrahydrofolate. This chain is Formate-dependent phosphoribosylglycinamide formyltransferase, found in Methanococcus maripaludis (strain DSM 14266 / JCM 13030 / NBRC 101832 / S2 / LL).